A 901-amino-acid polypeptide reads, in one-letter code: HTH-type transcriptional regulator MalT (901 aa).

39-46 (SPAGYGKT) contributes to the ATP binding site. The region spanning 829 to 894 (ELIRTSPLTQ…DAVQHAQQLL (66 aa)) is the HTH luxR-type domain. The H-T-H motif DNA-binding region spans 853–872 (NEQIAGELAVAATTIKTHIR).

It belongs to the MalT family. Monomer in solution. Oligomerizes to an active state in the presence of the positive effectors ATP and maltotriose.

With respect to regulation, activated by ATP and maltotriose, which are both required for DNA binding. Functionally, positively regulates the transcription of the maltose regulon whose gene products are responsible for uptake and catabolism of malto-oligosaccharides. Specifically binds to the promoter region of its target genes, recognizing a short DNA motif called the MalT box. The chain is HTH-type transcriptional regulator MalT from Salmonella choleraesuis (strain SC-B67).